A 465-amino-acid chain; its full sequence is U4/U6 small nuclear ribonucleoprotein PRP4 (465 aa).

7 WD repeats span residues 173–212, 216–256, 263–302, 305–344, 347–386, 391–432, and 435–464; these read VSTK…PLTQ, SHVG…GGLR, GHER…ELLL, GHDK…KVMT, GHSK…EGQL, AHRN…KMGS, and GHTD…IKLW.

In terms of assembly, component of the U4/U6-U5 tri-snRNP complex composed of the U4, U6 and U5 snRNAs and at least PRP3, PRP4, PRP6, PRP8, PRP18, PRP31, PRP38, SNU13, SNU23, SNU66, SNU114, SPP381, SMB1, SMD1, SMD2, SMD3, SMX2, SMX3, LSM2, LSM3, LSM4, LSM5, LSM6, LSM7, LSM8, BRR2 and DIB1.

It is found in the nucleus. Its function is as follows. Involved in RNA splicing. Is required for the association of U4/U6 snRNP with U5 snRNP in an early step of spliceosome assembly. In Saccharomyces cerevisiae (strain ATCC 204508 / S288c) (Baker's yeast), this protein is U4/U6 small nuclear ribonucleoprotein PRP4 (PRP4).